Consider the following 459-residue polypeptide: GTPase Der (459 aa).

2 EngA-type G domains span residues 3–167 and 188–363; these read FTFA…PEPE and IRVA…AVWN. Residues 9 to 16, 56 to 60, 119 to 122, 194 to 201, 241 to 245, and 306 to 309 contribute to the GTP site; these read GRPNVGKS, DTAGL, NKSE, GRPNAGKS, and NKWD. The KH-like domain maps to 364–448; the sequence is TRVSTAALNR…PVRITLREKA (85 aa).

It belongs to the TRAFAC class TrmE-Era-EngA-EngB-Septin-like GTPase superfamily. EngA (Der) GTPase family. As to quaternary structure, associates with the 50S ribosomal subunit.

GTPase that plays an essential role in the late steps of ribosome biogenesis. In Rhodopseudomonas palustris (strain HaA2), this protein is GTPase Der.